A 303-amino-acid chain; its full sequence is ADP-ribosyl cyclase/cyclic ADP-ribose hydrolase 1 (303 aa).

Residues M1 to K21 are Cytoplasmic-facing. Residues A22–L44 form a helical; Signal-anchor for type II membrane protein membrane-spanning segment. The Extracellular portion of the chain corresponds to W45 to V303. Cystine bridges form between C69/C85, C102/C183, and C163/C176. N-linked (GlcNAc...) asparagine glycosylation occurs at N103. C122 is an active-site residue. N123 carries N-linked (GlcNAc...) asparagine glycosylation. The active site involves C204. Residues N212 and N222 are each glycosylated (N-linked (GlcNAc...) asparagine). Disulfide bonds link C257–C278 and C290–C299.

Belongs to the ADP-ribosyl cyclase family. As to quaternary structure, homodimer. As to expression, spleen, liver, heart, thymus, thyroid gland, ileum, colon, cerebellum, salivary gland, adrenal gland, jejunum, islets of Langerhans and osteoclasts.

It is found in the cell membrane. The catalysed reaction is NAD(+) = cyclic ADP-beta-D-ribose + nicotinamide + H(+). It carries out the reaction nicotinate + NADP(+) = nicotinate-adenine dinucleotide phosphate + nicotinamide. It catalyses the reaction NAD(+) + H2O = ADP-D-ribose + nicotinamide + H(+). Both NAADP and cADPR synthesis are inhibited by nicotinic acid. Its function is as follows. Synthesizes the second messengers cyclic ADP-ribose and nicotinate-adenine dinucleotide phosphate, the former a second messenger for glucose-induced insulin secretion, the latter a Ca(2+) mobilizer. Also has cADPR hydrolase activity. Functionally, regulates osteoclastic bone resorption, probably via production of cyclic ADP-ribose and triggering of a cytosolic calcium ion signal through ryanodine receptor activation. In Rattus norvegicus (Rat), this protein is ADP-ribosyl cyclase/cyclic ADP-ribose hydrolase 1 (Cd38).